Here is a 598-residue protein sequence, read N- to C-terminus: Transcription factor dpl-1 (598 aa).

3 disordered regions span residues 1 to 73 (MNPT…PTGL), 435 to 457 (NRPY…VNSG), and 573 to 598 (TEQP…DYFQ). The segment covering 13-22 (PAQSRPQVSL) has biased composition (polar residues). Residues 55-64 (GVGGSSGAGG) are compositionally biased toward gly residues.

Belongs to the E2F/DP family. Component of the DRM complex, at least composed of lin-9, lin-35, lin-37, lin-52, lin-53, lin-54- dpl-1 and efl-1. Interacts (via N-terminus) with efl-1. Interacts (via C-terminus) with lin-35 (via C-terminus).

Its subcellular location is the nucleus. In terms of biological role, synthetic multivulva class B (synMuvB) protein. SynMuvB proteins are required to repress the induction of vulval development by Ras signaling and probably act by forming the multiprotein DRM complex that represses transcription. May also negatively regulate vulval development in association with other SynMuv class B proteins such as lin-15A. Can stimulate E2F-dependent transcription. Plays a role in negatively regulating the progression through the G1 phase of the cell cycle during postembryonic development, most likely by acting as a transcriptional repressor in association with the cell cycle regulatory factor efl-1 and the transcriptional repressor lin-35, but may also act as a positive regulator of cell cycle entry. Involved in the regulation of intestinal cell division during postembryonic development, most likely in complex with efl-1 and lin-35. Promotes germ cell programmed cell death, probably together with efl-1, by positively regulating the expression of the apoptosis proteins ced-3 and ced-4. In particular, positively regulates the expression of ced-4 in response to starvation. Its role in programmed cell death may be in conjunction with cell cycle regulatory factor efl-1 and the synthetic multivulva class B proteins lin-35, lin-37 and lin-52, and is independent of the ced-1, ced-8 and ced-9 pathways. The chain is Transcription factor dpl-1 from Caenorhabditis elegans.